The primary structure comprises 854 residues: Leucine--tRNA ligase (854 aa).

The segment at 1-32 is disordered; the sequence is MARRDMAAETMDPRASTEPSPNEPREPARYDH. Residues 23 to 32 are compositionally biased toward basic and acidic residues; that stretch reads EPREPARYDH. The 'HIGH' region signature appears at 69-80; it reads PYPSGSGLHVGH. Residues 633-637 carry the 'KMSKS' region motif; that stretch reads KMSKS. Residue Lys-636 coordinates ATP.

The protein belongs to the class-I aminoacyl-tRNA synthetase family.

It is found in the cytoplasm. The enzyme catalyses tRNA(Leu) + L-leucine + ATP = L-leucyl-tRNA(Leu) + AMP + diphosphate. The protein is Leucine--tRNA ligase of Sorangium cellulosum (strain So ce56) (Polyangium cellulosum (strain So ce56)).